Reading from the N-terminus, the 224-residue chain is Glycerol-3-phosphate acyltransferase (224 aa).

Transmembrane regions (helical) follow at residues 4–24 (FVIV…GSIN), 60–80 (LVIF…VYFV), 88–108 (SVVV…FPIW), 124–144 (IISV…LIII), 149–169 (IVSF…FIPW), and 182–202 (WPWW…IWSH).

It belongs to the PlsY family. In terms of assembly, probably interacts with PlsX.

The protein localises to the cell membrane. The enzyme catalyses an acyl phosphate + sn-glycerol 3-phosphate = a 1-acyl-sn-glycero-3-phosphate + phosphate. The protein operates within lipid metabolism; phospholipid metabolism. Functionally, catalyzes the transfer of an acyl group from acyl-phosphate (acyl-PO(4)) to glycerol-3-phosphate (G3P) to form lysophosphatidic acid (LPA). This enzyme utilizes acyl-phosphate as fatty acyl donor, but not acyl-CoA or acyl-ACP. The sequence is that of Glycerol-3-phosphate acyltransferase from Mycoplasmopsis pulmonis (strain UAB CTIP) (Mycoplasma pulmonis).